Reading from the N-terminus, the 265-residue chain is tRNA pseudouridine synthase A (265 aa).

The active-site Nucleophile is aspartate 53. Residue tyrosine 111 coordinates substrate.

Belongs to the tRNA pseudouridine synthase TruA family. In terms of assembly, homodimer.

It carries out the reaction uridine(38/39/40) in tRNA = pseudouridine(38/39/40) in tRNA. Formation of pseudouridine at positions 38, 39 and 40 in the anticodon stem and loop of transfer RNAs. The chain is tRNA pseudouridine synthase A from Acinetobacter baumannii (strain ATCC 17978 / DSM 105126 / CIP 53.77 / LMG 1025 / NCDC KC755 / 5377).